Here is a 386-residue protein sequence, read N- to C-terminus: Cysteine protease Amb a 11.0101 (386 aa).

The signal sequence occupies residues 1–22 (MEINKLVCFSFSLVLILGLVES). The T-cell epitope. MHC class II peptide able to activate CD(4+) T cells of the ragweed pollen-allergic patients indicated by significantly increased IL-2 production compared to non-allergic individuals. Not recognized by IgE of the patients allergic to ragweed pollen stretch occupies residues 6–20 (LVCFSFSLVLILGLV). Positions 23 to 108 (FHYHERELES…SKISHFQALR (86 aa)) are cleaved as a propeptide — activation peptide. N-linked (GlcNAc...) (complex) asparagine glycosylation is present at Asn-127. 3 cysteine pairs are disulfide-bonded: Cys-152–Cys-193, Cys-186–Cys-226, and Cys-283–Cys-334. Cys-155 is a catalytic residue. Residues 173 to 186 (GKLVKFSEQQLVDC) form a B-cell epitope. Binds to IgE of the patients allergic to ragweed pollen region. Residues His-289 and Asn-310 contribute to the active site. The disordered stretch occupies residues 340–377 (SSFPIMNDPNPPKDDPNGPKDDPDAPKDPKFKTTQRLQ). Basic and acidic residues predominate over residues 350–370 (PPKDDPNGPKDDPDAPKDPKF). Positions 371–386 (KTTQRLQGIRTKLLEL) are cleaved as a propeptide — removed in mature form.

The protein belongs to the peptidase C1 family. Homodimer. Post-translationally, autocatalytic proteolytic cleavage of N-terminal activation peptide. N-glycosylated. Glycosylation is not required for binding to IgE. In terms of tissue distribution, expressed in pollen (at protein and mRNA level).

Activated by L-cysteine. Inhibited by cysteine protease inhibitor E64 (L-trans-epoxysuccinyl-leucylamide-(4-guanido)-butane). Inhibited by cysteine/serine protease inhibitor leupeptin. Not inhibited by serine protease inhibitors 4-(2-aminoethyl)benzenesulfonyl fluoride hydrochloride (AEBSF) and phenylmethanesulfonyl fluoride (PMSF), metallo protease inhibitor bestatin or aspartic protease inhibitor pepstatin A. Functionally, cysteine protease. Hydrolyzes casein and synthetic peptide Boc-Val-Leu-Lys-7-amino-4-methylcoumarin (Boc-VLK-AMC) in vitro. The chain is Cysteine protease Amb a 11.0101 from Ambrosia artemisiifolia (Common ragweed).